The sequence spans 235 residues: 7-carboxy-7-deazaguanine synthase (235 aa).

Residues 25 to 27 and arginine 40 contribute to the substrate site; that span reads IQG. Positions 31–235 constitute a Radical SAM core domain; it reads FTGTYSVFVR…PRLHLLVQLP (205 aa). Positions 44, 48, and 51 each coordinate [4Fe-4S] cluster. Threonine 53 is a binding site for Mg(2+). A substrate-binding site is contributed by threonine 85. S-adenosyl-L-methionine-binding positions include glycine 87 and 135 to 137; that span reads SPK. Proline 235 provides a ligand contact to substrate.

The protein belongs to the radical SAM superfamily. 7-carboxy-7-deazaguanine synthase family. Homodimer. [4Fe-4S] cluster is required as a cofactor. It depends on S-adenosyl-L-methionine as a cofactor. The cofactor is Mg(2+).

It catalyses the reaction 6-carboxy-5,6,7,8-tetrahydropterin + H(+) = 7-carboxy-7-deazaguanine + NH4(+). It functions in the pathway purine metabolism; 7-cyano-7-deazaguanine biosynthesis. In terms of biological role, catalyzes the complex heterocyclic radical-mediated conversion of 6-carboxy-5,6,7,8-tetrahydropterin (CPH4) to 7-carboxy-7-deazaguanine (CDG), a step common to the biosynthetic pathways of all 7-deazapurine-containing compounds. The chain is 7-carboxy-7-deazaguanine synthase from Hyperthermus butylicus (strain DSM 5456 / JCM 9403 / PLM1-5).